The sequence spans 322 residues: Malate dehydrogenase 1 (322 aa).

NAD(+) is bound by residues 10 to 15 and Asp-34; that span reads GSGQIG. Positions 83 and 89 each coordinate substrate. Residues Asn-96 and 119-121 contribute to the NAD(+) site; that span reads ITN. Substrate is bound by residues Asn-121 and Arg-152. The active-site Proton acceptor is the His-176.

The protein belongs to the LDH/MDH superfamily. MDH type 3 family.

The catalysed reaction is (S)-malate + NAD(+) = oxaloacetate + NADH + H(+). In terms of biological role, catalyzes the reversible oxidation of malate to oxaloacetate. The protein is Malate dehydrogenase 1 of Rhodopseudomonas palustris (strain BisB18).